Reading from the N-terminus, the 119-residue chain is Large ribosomal subunit protein bL20 (119 aa).

This sequence belongs to the bacterial ribosomal protein bL20 family.

Its function is as follows. Binds directly to 23S ribosomal RNA and is necessary for the in vitro assembly process of the 50S ribosomal subunit. It is not involved in the protein synthesizing functions of that subunit. The polypeptide is Large ribosomal subunit protein bL20 (Enterococcus faecalis (strain ATCC 700802 / V583)).